Here is a 521-residue protein sequence, read N- to C-terminus: Sodium/hydrogen exchanger 5 (521 aa).

Residues 1 to 23 (MEEVMISPVEHDPQGQVKQQQAA) lie on the Cytoplasmic side of the membrane. Residues 24–44 (GVGILLQIMMLVLSFVLGHVL) traverse the membrane as a helical segment. Residues 45-48 (RRHR) are Lumenal-facing. A helical transmembrane segment spans residues 49 to 69 (FHYLPEASGSLLIGLIVGILA). Topologically, residues 70-86 (NISDTETSIRTWFNFHE) are cytoplasmic. An intramembrane region (helical) is located at residues 87 to 107 (EFFFLFLLPPIIFQSGFSLQP). Topologically, residues 108–115 (KPFFSNFG) are cytoplasmic. The chain crosses the membrane as a helical span at residues 116-136 (AIVTFAIIGTFVASVVTGGLV). The Lumenal segment spans residues 137-141 (YLGGS). 2 intramembrane regions (helical) span residues 142-162 (MYLMYKLPFVECLMFGALISA) and 166-186 (VTVLSIFQDVGTDVNLYALVF). The Lumenal portion of the chain corresponds to 187-222 (GESVLNDAMAISLYRTMSLVNRQSSSGEHFFMVVIR). Residues 223 to 243 (FFETFAGSMSAGVGVGFTSAL) form a helical membrane-spanning segment. Residues 244 to 271 (LFKYAGLDTENLQNLECCLFVLFPYFSY) lie on the Cytoplasmic side of the membrane. The helical transmembrane segment at 272–292 (MLAEGVGLSGIVSILFTGIVM) threads the bilayer. Residues 293-310 (KRYTFSNLSEASQSFVSS) are Lumenal-facing. An N-linked (GlcNAc...) asparagine glycan is attached at Asn299. A helical transmembrane segment spans residues 311–331 (FFHLISSLAETFTFIYMGFDI). Over 332–340 (AMEQHSWSH) the chain is Cytoplasmic. Residues 341-361 (VGFILFSILFIGVARAVNVFG) traverse the membrane as a helical segment. At 362–382 (CAYLVNLFRQENQKIPMKHQK) the chain is on the lumenal side. The chain crosses the membrane as a helical span at residues 383–402 (ALWYSGLRGAMAFALALQSL). The Cytoplasmic portion of the chain corresponds to 403-411 (HDLPEGHGQ). Residues 412–432 (IIFTATTTIVVVTVLLIGGST) form a helical membrane-spanning segment. Residues 433–521 (GKMLEALEVV…NSGDGDGDGE (89 aa)) lie on the Lumenal side of the membrane. The disordered stretch occupies residues 453-480 (GFEESDHQYVPPPFSIGASSDEDTSSSG). Positions 467-480 (SIGASSDEDTSSSG) are enriched in low complexity.

It belongs to the monovalent cation:proton antiporter 1 (CPA1) transporter (TC 2.A.36) family. In terms of tissue distribution, expressed in roots, leaves, stems, flowers and siliques. Detected at low levels in roots and shoots.

The protein resides in the endosome membrane. Its subcellular location is the golgi apparatus. It localises to the trans-Golgi network membrane. It is found in the golgi stack membrane. The enzyme catalyses Na(+)(in) + H(+)(out) = Na(+)(out) + H(+)(in). It carries out the reaction K(+)(in) + H(+)(out) = K(+)(out) + H(+)(in). Involved in trafficking to the vacuole. Required for cell proliferation and cell expansion, but not for cell differentiation. Acts in low affinity electroneutral exchange of protons for cations such as Na(+) or K(+) across membranes. May also exchange Li(+) and Cs(+) with a lower affinity. The chain is Sodium/hydrogen exchanger 5 (NHX5) from Arabidopsis thaliana (Mouse-ear cress).